A 192-amino-acid polypeptide reads, in one-letter code: Xanthine phosphoribosyltransferase (192 aa).

Xanthine contacts are provided by Leu20 and Asn27. 128 to 132 (ANGDA) serves as a coordination point for 5-phospho-alpha-D-ribose 1-diphosphate. Lys156 serves as a coordination point for xanthine.

This sequence belongs to the purine/pyrimidine phosphoribosyltransferase family. Xpt subfamily. As to quaternary structure, homodimer.

Its subcellular location is the cytoplasm. The enzyme catalyses XMP + diphosphate = xanthine + 5-phospho-alpha-D-ribose 1-diphosphate. The protein operates within purine metabolism; XMP biosynthesis via salvage pathway; XMP from xanthine: step 1/1. Converts the preformed base xanthine, a product of nucleic acid breakdown, to xanthosine 5'-monophosphate (XMP), so it can be reused for RNA or DNA synthesis. The chain is Xanthine phosphoribosyltransferase from Staphylococcus aureus (strain bovine RF122 / ET3-1).